The primary structure comprises 120 residues: Large ribosomal subunit protein uL18 (120 aa).

This sequence belongs to the universal ribosomal protein uL18 family. Part of the 50S ribosomal subunit; part of the 5S rRNA/L5/L18/L25 subcomplex. Contacts the 5S and 23S rRNAs.

In terms of biological role, this is one of the proteins that bind and probably mediate the attachment of the 5S RNA into the large ribosomal subunit, where it forms part of the central protuberance. This is Large ribosomal subunit protein uL18 from Staphylococcus saprophyticus subsp. saprophyticus (strain ATCC 15305 / DSM 20229 / NCIMB 8711 / NCTC 7292 / S-41).